The sequence spans 500 residues: Transcription termination factor MTERF8, chloroplastic (500 aa).

The N-terminal 64 residues, 1 to 64 (MVILSLVSCS…NHREPALTFR (64 aa)), are a transit peptide targeting the chloroplast.

It belongs to the mTERF family.

Its subcellular location is the plastid. It is found in the chloroplast. Transcription termination factor that is transcriptionally active in chloroplasts. This is Transcription termination factor MTERF8, chloroplastic from Arabidopsis thaliana (Mouse-ear cress).